The primary structure comprises 196 residues: Pyridoxal 5'-phosphate synthase subunit PdxT (196 aa).

Residue 52-54 (GES) coordinates L-glutamine. C84 functions as the Nucleophile in the catalytic mechanism. L-glutamine contacts are provided by residues R113 and 141–142 (IR). Active-site charge relay system residues include H178 and E180.

This sequence belongs to the glutaminase PdxT/SNO family. In the presence of PdxS, forms a dodecamer of heterodimers. Only shows activity in the heterodimer.

It carries out the reaction aldehydo-D-ribose 5-phosphate + D-glyceraldehyde 3-phosphate + L-glutamine = pyridoxal 5'-phosphate + L-glutamate + phosphate + 3 H2O + H(+). The catalysed reaction is L-glutamine + H2O = L-glutamate + NH4(+). Its pathway is cofactor biosynthesis; pyridoxal 5'-phosphate biosynthesis. Its function is as follows. Catalyzes the hydrolysis of glutamine to glutamate and ammonia as part of the biosynthesis of pyridoxal 5'-phosphate. The resulting ammonia molecule is channeled to the active site of PdxS. This chain is Pyridoxal 5'-phosphate synthase subunit PdxT, found in Pyrococcus horikoshii (strain ATCC 700860 / DSM 12428 / JCM 9974 / NBRC 100139 / OT-3).